We begin with the raw amino-acid sequence, 269 residues long: Mitochondrial distribution and morphology protein 12 (269 aa).

The region spanning 1 to 269 (MSLEVNWEQI…WPNWIEFQGV (269 aa)) is the SMP-LTD domain. Residues 72-119 (ERAGTGEGDEDDGRVAPTSTPMKHQTSGSSDQTDASNPISPSTSHDHE) are disordered. Over residues 88–114 (PTSTPMKHQTSGSSDQTDASNPISPST) the composition is skewed to polar residues.

The protein belongs to the MDM12 family. As to quaternary structure, component of the ER-mitochondria encounter structure (ERMES) or MDM complex, composed of MMM1, MDM10, MDM12 and MDM34. An MMM1 homodimer associates with one molecule of MDM12 on each side in a pairwise head-to-tail manner, and the SMP-LTD domains of MMM1 and MDM12 generate a continuous hydrophobic tunnel for phospholipid trafficking.

The protein resides in the mitochondrion outer membrane. It localises to the endoplasmic reticulum membrane. Functionally, component of the ERMES/MDM complex, which serves as a molecular tether to connect the endoplasmic reticulum (ER) and mitochondria. Components of this complex are involved in the control of mitochondrial shape and protein biogenesis, and function in nonvesicular lipid trafficking between the ER and mitochondria. MDM12 is required for the interaction of the ER-resident membrane protein MMM1 and the outer mitochondrial membrane-resident beta-barrel protein MDM10. The MDM12-MMM1 subcomplex functions in the major beta-barrel assembly pathway that is responsible for biogenesis of all mitochondrial outer membrane beta-barrel proteins, and acts in a late step after the SAM complex. The MDM10-MDM12-MMM1 subcomplex further acts in the TOM40-specific pathway after the action of the MDM12-MMM1 complex. Essential for establishing and maintaining the structure of mitochondria and maintenance of mtDNA nucleoids. The polypeptide is Mitochondrial distribution and morphology protein 12 (Komagataella phaffii (strain GS115 / ATCC 20864) (Yeast)).